The chain runs to 252 residues: Proteasome subunit alpha 1 (252 aa).

M1 bears the N-acetylmethionine; alternate mark.

It belongs to the peptidase T1A family. The 20S proteasome core is composed of 14 alpha and 14 beta subunits that assemble into four stacked heptameric rings, resulting in a barrel-shaped structure. The two inner rings, each composed of seven catalytic beta subunits, are sandwiched by two outer rings, each composed of seven alpha subunits. H.volcanii produces at least 2 types of 20S proteasomes: an alpha1-beta proteasome and a proteasome containing all three subunits (alpha1, alpha2, and beta) that appears to be asymmetrical with homo-oligomeric alpha1 and alpha2 rings positioned on separate ends. The catalytic chamber with the active sites is on the inside of the barrel. Has probably a gated structure, the ends of the cylinder being occluded by the N-termini of the alpha-subunits. Is likely capped at one or both ends by the proteasome regulatory ATPase, PAN. Acetylated. The acetylated form at Met-1 was shown to be in 100-fold excess of the unacetylated form with the initiator methionine removed in whole cells and purified 20S proteasomes.

It is found in the cytoplasm. The formation of the proteasomal ATPase PAN-20S proteasome complex, via the docking of the C-termini of PAN into the intersubunit pockets in the alpha-rings, triggers opening of the gate for substrate entry. Interconversion between the open-gate and close-gate conformations leads to a dynamic regulation of the 20S proteasome proteolysis activity. In vitro, the chymotrypsin-like activity of the alpha1-beta proteasome is potently inhibited by carbobenzoxyl-leucinyl-leucinyl-leucinal-H (MG132) and significantly by N-acetyl-leucinyl-leucinyl-norleucinal-H (calpain inhibitor I). In terms of biological role, component of the proteasome core, a large protease complex with broad specificity involved in protein degradation. The H.volcanii alpha1-beta proteasome is able to cleave oligopeptides after Phe, Tyr and Trp, poorly after Glu but not after Arg. Thus, displays chymotrypsin-like activity, low caspase-like activity but no trypsin-like activity. This is Proteasome subunit alpha 1 from Haloferax volcanii (strain ATCC 29605 / DSM 3757 / JCM 8879 / NBRC 14742 / NCIMB 2012 / VKM B-1768 / DS2) (Halobacterium volcanii).